A 114-amino-acid polypeptide reads, in one-letter code: Flagellar transcriptional regulator FlhD (114 aa).

This sequence belongs to the FlhD family. Homodimer; disulfide-linked. Forms a heterohexamer composed of two FlhC and four FlhD subunits. Each FlhC binds a FlhD dimer, forming a heterotrimer, and a hexamer assembles by dimerization of two heterotrimers.

Its subcellular location is the cytoplasm. Its function is as follows. Functions in complex with FlhC as a master transcriptional regulator that regulates transcription of several flagellar and non-flagellar operons by binding to their promoter region. Activates expression of class 2 flagellar genes, including fliA, which is a flagellum-specific sigma factor that turns on the class 3 genes. Also regulates genes whose products function in a variety of physiological pathways. The polypeptide is Flagellar transcriptional regulator FlhD (Wigglesworthia glossinidia brevipalpis).